The primary structure comprises 207 residues: Thiamine-phosphate synthase (207 aa).

Residues 35 to 39 (QYRDK) and Asn-67 contribute to the 4-amino-2-methyl-5-(diphosphooxymethyl)pyrimidine site. Residues Asp-68 and Asp-86 each contribute to the Mg(2+) site. Thr-105 contributes to the 4-amino-2-methyl-5-(diphosphooxymethyl)pyrimidine binding site. 132-134 (SVT) contacts 2-[(2R,5Z)-2-carboxy-4-methylthiazol-5(2H)-ylidene]ethyl phosphate. Lys-135 serves as a coordination point for 4-amino-2-methyl-5-(diphosphooxymethyl)pyrimidine. 2-[(2R,5Z)-2-carboxy-4-methylthiazol-5(2H)-ylidene]ethyl phosphate is bound at residue Gly-162.

The protein belongs to the thiamine-phosphate synthase family. Requires Mg(2+) as cofactor.

It catalyses the reaction 2-[(2R,5Z)-2-carboxy-4-methylthiazol-5(2H)-ylidene]ethyl phosphate + 4-amino-2-methyl-5-(diphosphooxymethyl)pyrimidine + 2 H(+) = thiamine phosphate + CO2 + diphosphate. It carries out the reaction 2-(2-carboxy-4-methylthiazol-5-yl)ethyl phosphate + 4-amino-2-methyl-5-(diphosphooxymethyl)pyrimidine + 2 H(+) = thiamine phosphate + CO2 + diphosphate. The enzyme catalyses 4-methyl-5-(2-phosphooxyethyl)-thiazole + 4-amino-2-methyl-5-(diphosphooxymethyl)pyrimidine + H(+) = thiamine phosphate + diphosphate. It functions in the pathway cofactor biosynthesis; thiamine diphosphate biosynthesis; thiamine phosphate from 4-amino-2-methyl-5-diphosphomethylpyrimidine and 4-methyl-5-(2-phosphoethyl)-thiazole: step 1/1. Its function is as follows. Condenses 4-methyl-5-(beta-hydroxyethyl)thiazole monophosphate (THZ-P) and 2-methyl-4-amino-5-hydroxymethyl pyrimidine pyrophosphate (HMP-PP) to form thiamine monophosphate (TMP). This is Thiamine-phosphate synthase from Pseudomonas putida (strain ATCC 700007 / DSM 6899 / JCM 31910 / BCRC 17059 / LMG 24140 / F1).